Consider the following 201-residue polypeptide: Recombination protein RecR (201 aa).

A C4-type zinc finger spans residues 57 to 72; the sequence is CRDCRTFTEQEVCTIC. The 96-residue stretch at 81–176 folds into the Toprim domain; that stretch reads GQICVVESPA…LASRIAHGVP (96 aa).

The protein belongs to the RecR family.

Its function is as follows. May play a role in DNA repair. It seems to be involved in an RecBC-independent recombinational process of DNA repair. It may act with RecF and RecO. This Edwardsiella ictaluri (strain 93-146) protein is Recombination protein RecR.